Consider the following 157-residue polypeptide: Small ribosomal subunit protein uS7 (157 aa).

It belongs to the universal ribosomal protein uS7 family. As to quaternary structure, part of the 30S ribosomal subunit. Contacts proteins S9 and S11.

One of the primary rRNA binding proteins, it binds directly to 16S rRNA where it nucleates assembly of the head domain of the 30S subunit. Is located at the subunit interface close to the decoding center, probably blocks exit of the E-site tRNA. This Stenotrophomonas maltophilia (strain R551-3) protein is Small ribosomal subunit protein uS7.